The sequence spans 84 residues: MKQGIHPKYREVVFQDISSDFAFITRSTVRTNETIQWEDGKEYPLFKVEVSSKSHPFYTGKQRALSSGGRVDQFQKKFGISTGN.

It belongs to the bacterial ribosomal protein bL31 family. Type B subfamily. In terms of assembly, part of the 50S ribosomal subunit.

The chain is Large ribosomal subunit protein bL31B from Alkalilimnicola ehrlichii (strain ATCC BAA-1101 / DSM 17681 / MLHE-1).